We begin with the raw amino-acid sequence, 280 residues long: MSINLQNVSYTYQAGTPFEGRALFNINLDILDGSYTAFIGHTGSGKSTIMQLLNGLHVPTTGIVSVDKQDITNHSKNKEIKSIRKHVGLVFQFPESQLFEETVLKDVAFGPQNFGVSPEEAEALAREKLALVGISENLFEKNPFELSGGQMRRVAIAGILAMQPKVLVLDEPTAGLDPKGRKELMTIFKKLHQSGMTIVLVTHLMDDVANYADFVYVLDKGKIILSGKPKTIFQQVSLLEKKQLGVPKVTKLAQRLVDRGIPISSLPITLEELKEVLKHG.

Residues 3–245 (INLQNVSYTY…VSLLEKKQLG (243 aa)) enclose the ABC transporter domain. An ATP-binding site is contributed by 40–47 (GHTGSGKS).

It belongs to the ABC transporter superfamily. Energy-coupling factor EcfA family. As to quaternary structure, forms a stable energy-coupling factor (ECF) transporter complex composed of 2 membrane-embedded substrate-binding proteins (S component), 2 ATP-binding proteins (A component) and 2 transmembrane proteins (T component).

The protein resides in the cell membrane. In terms of biological role, ATP-binding (A) component of a common energy-coupling factor (ECF) ABC-transporter complex. Unlike classic ABC transporters this ECF transporter provides the energy necessary to transport a number of different substrates. The protein is Energy-coupling factor transporter ATP-binding protein EcfA2 of Streptococcus pyogenes serotype M28 (strain MGAS6180).